The primary structure comprises 144 residues: MNFKYIVAVSFLIASAYARSEENDEQSLSQRDILEEESLREIRGIGAKILGGVKTALKGALKELASTYVNGKRTAEDHEVMKRLEAVMRDLDSLDYPEEAAERETRGFNQEEIANLFTKKEKRILGPVIGTIGNVLGGLLKNLG.

The N-terminal stretch at 1-18 (MNFKYIVAVSFLIASAYA) is a signal peptide. Positions 19-43 (RSEENDEQSLSQRDILEEESLREIR) are excised as a propeptide. N70 is subject to Asparagine amide. The propeptide occupies 74–123 (TAEDHEVMKRLEAVMRDLDSLDYPEEAAERETRGFNQEEIANLFTKKEKR). A Leucine amide modification is found at L143.

Belongs to the bombinin family. As to expression, expressed by the skin glands.

The protein localises to the secreted. Functionally, maximin-7 shows antimicrobial activity against bacteria and against the fungus C.albicans. It has little hemolytic activity. Its function is as follows. Maximin-H6 shows antimicrobial activity against bacteria and against the fungus C.albicans. Shows strong hemolytic activity. The chain is Maximins 7/H6 from Bombina maxima (Giant fire-bellied toad).